The sequence spans 127 residues: MSYRKLGWDSSQRKAMLREMTTQLIINERIVTTEARAKEVRRTAEKMITLGKRGDLAARRKAAAFVRNEIADIHEEGDEVVVKSALQKLFSDVAPRYKDRNGGYTRIMKLAVPRKGDAAPMVVLELV.

It belongs to the bacterial ribosomal protein bL17 family. In terms of assembly, part of the 50S ribosomal subunit. Contacts protein L32.

The sequence is that of Large ribosomal subunit protein bL17 from Lactobacillus delbrueckii subsp. bulgaricus (strain ATCC 11842 / DSM 20081 / BCRC 10696 / JCM 1002 / NBRC 13953 / NCIMB 11778 / NCTC 12712 / WDCM 00102 / Lb 14).